The primary structure comprises 497 residues: Early growth response protein 1-A (497 aa).

The segment covering 139–165 (SPSSAPSSSPSSSSSSSSSQSPPLSCS) has biased composition (low complexity). 3 disordered regions span residues 139-169 (SPSS…VQSN), 175-194 (YSAA…DHSP), and 286-309 (PSRM…YGCP). 3 C2H2-type zinc fingers span residues 306–330 (YGCP…IRIH), 336–358 (FQCR…IRTH), and 364–386 (FACD…TKIH). Residues 377–441 (DERKRHTKIH…SYPSPVHSSF (65 aa)) are disordered. The segment covering 381–391 (RHTKIHLRQKD) has biased composition (basic residues). Low complexity predominate over residues 397-441 (ATPVSVASPVSSYSPSASTSYPSPVPTSYSSPVSSSYPSPVHSSF).

It belongs to the EGR C2H2-type zinc-finger protein family. In terms of tissue distribution, expressed in the presumptive mesoderm. In blastula embryos, expressed in the dorsal marginal zone, and at the onset of gastrulation expression is specific to the Spemann organizer. As gastrulation proceeds, expressed in a ring around the yolk plug. This expression is maintained in advanced gastrulae, with weak expression also extending into the dorsal midline. By the neurula stage, expression is excluded from the notochord. In late tailbud stages, expressed in two spots in the anterior forebrain, which are connected via a bridge of cells that also show expression.

The protein localises to the nucleus. It localises to the cytoplasm. In terms of biological role, transcriptional regulator. Recognizes and binds to the DNA sequence 5'-GCG(T/G)GGGCG-3'(EGR-site) in the promoter region of target genes. Binds double-stranded target DNA, irrespective of the cytosine methylation status. Regulates the transcription of numerous target genes, and thereby plays an important role in regulating the response to growth factors, DNA damage, and ischemia. Plays a role in the regulation of cell survival, proliferation and cell death. Mediates responses to ischemia and hypoxia; regulates the expression of proteins that are involved in inflammatory processes. Plays a role in regulating the expression of circadian clock genes. The chain is Early growth response protein 1-A (egr1-a) from Xenopus laevis (African clawed frog).